The following is a 664-amino-acid chain: MAAVGPPQQQVRMAHQQVWAALEVALRVPCLYIIDAIFNSYPDSSQSRFCIVLQIFLRLFGVFASSIVLILSQRSLFKFYTYSSAFLLAATSVLVNYYASLHIDFYGAYNTSAFGIELLPRKGPSLWMALIVLQLTFGIGYVTLLQIHSIYSQLIILDLLVPVIGLITELPLHIRETLLFTSSLILTLNTVFVLAVKLKWFYYSTRYVYLLVRHMYRIYGLQLLMEDTWKRIRFPDILRVFWLTRVTAQATVLMYILRMANETDSFFISWDDFWDLICNLIISGCDSTLTVLGMSAVISSVAHYLGLGILAFIGSTEEDDRRLGFVAPVLFFILALQTGLSGLRPEERLIRLSRNMCLLLTAVLHFIHGMTDPVLMSLSASHVSSFRRHFPVLFVSACLFILPVLLSYVLWHHYALNTWLFAVTAFCVELCLKVIVSLTVYTLFMIDGYYNVLWEKLDDYVYYVRSTGSIIEFIFGVVMFGNGAYTMMFESGSKIRAFMMCLHAYFNIYLQAKNGWKTFMNRRTAVKKINSLPEIKGSRLQEINDVCAICYHEFTTSARITPCNHYFHALCLRKWLYIQDTCPMCHQKVYIEDDIKDNSNVSNNNGFIPPNETPEEAVREAAAESDRELNEDDSTDCDDDVQRERNGVIQHTGAAAEEFNDDTD.

A2 is modified (N-acetylalanine). 12 helical membrane-spanning segments follow: residues 51–71 (IVLQ…VLIL), 85–105 (AFLL…HIDF), 125–145 (SLWM…VTLL), 154–174 (LIIL…PLHI), 178–198 (LLFT…AVKL), 293–313 (GMSA…LAFI), 323–343 (LGFV…LSGL), 356–376 (MCLL…PVLM), 390–410 (FPVL…SYVL), 420–440 (LFAV…SLTV), 469–489 (SIIE…TMMF), and 495–512 (IRAF…YLQA). The RING-type; atypical zinc-finger motif lies at 547-586 (CAICYHEFTTSARITPCNHYFHALCLRKWLYIQDTCPMCH). Residues 601–664 (VSNNNGFIPP…AAEEFNDDTD (64 aa)) are disordered. Residues 616-628 (EAVREAAAESDRE) show a composition bias toward basic and acidic residues. Acidic residues predominate over residues 629 to 639 (LNEDDSTDCDD). S634 bears the Phosphoserine mark. Phosphothreonine occurs at positions 635 and 663.

As to quaternary structure, interacts with MHC class I and HM13. Interacts with VHL. Component of SCAP-SREBP complex composed of SREBF2, SCAP and RNF139; the complex hampers the interaction between SCAP and SEC24B, thereby reducing SREBF2 proteolytic processing. Interacts with SREBF2 (via C-terminal domain). Interacts with SCAP; the interaction inhibits the interaction of SCAP with SEC24B and hampering the ER to Golgi transport of the SCAP-SREBP complex. Interacts with SEC24B. Interacts with INSIG1 and INSIG2. Interacts with EIF3F and EIF3H; the interaction leads to protein translation inhibitions in a ubiquitination-dependent manner. Interacts with XBP1 isoform 1; the interaction induces ubiquitination and degradation of XBP1 isoform 1. Interacts with AUP1, AMFR and UBE2G2; interaction with AUP1 facilitates interaction of RNF139 with ubiquitin-conjugating enzyme UBE2G2 and ubiquitin ligase AMFR/gp78, leading to sterol-induced ubiquitination of HMGCR and its subsequent proteasomal degradation. Autoubiquitinated. Ubiquitination is induced by sterol and leads to ist degradation via the ubiquitin-proteasome pathway. Highly expressed in testis, placenta and adrenal gland. Moderate expression in heart, brain, liver, skeletal muscle and pancreas, and low expression in lung and kidney.

It is found in the endoplasmic reticulum membrane. The enzyme catalyses S-ubiquitinyl-[E2 ubiquitin-conjugating enzyme]-L-cysteine + [acceptor protein]-L-lysine = [E2 ubiquitin-conjugating enzyme]-L-cysteine + N(6)-ubiquitinyl-[acceptor protein]-L-lysine.. It functions in the pathway protein modification; protein ubiquitination. Its function is as follows. E3-ubiquitin ligase; acts as a negative regulator of cell proliferation through mechanisms involving G2/M arrest and cell death. Required for MHC class I ubiquitination in cells expressing the cytomegalovirus protein US2 before dislocation from the endoplasmic reticulum (ER). Affects SREBP processing by hindering the SREBP-SCAP complex translocation from the ER to the Golgi, thereby reducing SREBF2 target gene expression. Involved in the sterol-accelerated degradation of HMGCR. This is achieved through binding of RNF139 to INSIG1 and/or INSIG2 at the ER membrane. In addition, interaction of RNF139 with AUP1 facilitates interaction of RNF139 with ubiquitin-conjugating enzyme UBE2G2 and ubiquitin ligase AMFR, leading to ubiquitination of HMGCR. The ubiquitinated HMGCR is then released from the ER into the cytosol for subsequent destruction. Required for INSIG1 ubiquitination. May be required for EIF3 complex ubiquitination. In Homo sapiens (Human), this protein is E3 ubiquitin-protein ligase RNF139.